We begin with the raw amino-acid sequence, 208 residues long: Imidazoleglycerol-phosphate dehydratase (208 aa).

It belongs to the imidazoleglycerol-phosphate dehydratase family.

It localises to the cytoplasm. The enzyme catalyses D-erythro-1-(imidazol-4-yl)glycerol 3-phosphate = 3-(imidazol-4-yl)-2-oxopropyl phosphate + H2O. It participates in amino-acid biosynthesis; L-histidine biosynthesis; L-histidine from 5-phospho-alpha-D-ribose 1-diphosphate: step 6/9. This is Imidazoleglycerol-phosphate dehydratase from Paenarthrobacter aurescens (strain TC1).